Here is a 143-residue protein sequence, read N- to C-terminus: Transcriptional regulator MraZ (143 aa).

2 SpoVT-AbrB domains span residues 5-47 (EYRH…TQEE) and 76-119 (ATEC…SEDR).

Belongs to the MraZ family. As to quaternary structure, forms oligomers.

The protein resides in the cytoplasm. Its subcellular location is the nucleoid. In Ligilactobacillus salivarius (strain UCC118) (Lactobacillus salivarius), this protein is Transcriptional regulator MraZ.